A 174-amino-acid polypeptide reads, in one-letter code: Shikimate kinase 2 (174 aa).

12 to 17 (GCGKTT) contributes to the ATP binding site. Thr-16 and Asp-32 together coordinate Mg(2+). Substrate contacts are provided by Asp-34, Arg-58, and Gly-79. Residues 112 to 126 (QAAPEEDLRPTLTGK) form an LID domain region. ATP is bound at residue Arg-120. Position 139 (Arg-139) interacts with substrate.

This sequence belongs to the shikimate kinase family. AroL subfamily. Monomer. The cofactor is Mg(2+).

The protein resides in the cytoplasm. It carries out the reaction shikimate + ATP = 3-phosphoshikimate + ADP + H(+). It participates in metabolic intermediate biosynthesis; chorismate biosynthesis; chorismate from D-erythrose 4-phosphate and phosphoenolpyruvate: step 5/7. Functionally, catalyzes the specific phosphorylation of the 3-hydroxyl group of shikimic acid using ATP as a cosubstrate. This chain is Shikimate kinase 2, found in Shigella boydii serotype 4 (strain Sb227).